Here is a 49-residue protein sequence, read N- to C-terminus: uncharacterized protein (49 aa).

A helical membrane pass occupies residues 23 to 43 (LYVISFVLFIVLFFGMFFKLI).

The protein localises to the host membrane. This is an uncharacterized protein from Spiroplasma melliferum (SpV1).